The chain runs to 454 residues: tRNA modification GTPase MnmE (454 aa).

Positions 23, 80, and 120 each coordinate (6S)-5-formyl-5,6,7,8-tetrahydrofolate. The 162-residue stretch at 216 to 377 (GMKVVIAGRP…LRSHLKEAMG (162 aa)) folds into the TrmE-type G domain. Asn226 contacts K(+). Residues 226-231 (NAGKSS), 245-251 (TDIAGTT), 270-273 (DTAG), and 358-360 (SAR) each bind GTP. Ser230 contacts Mg(2+). Residues Thr245, Ile247, and Thr250 each contribute to the K(+) site. Thr251 contacts Mg(2+). Lys454 lines the (6S)-5-formyl-5,6,7,8-tetrahydrofolate pocket.

The protein belongs to the TRAFAC class TrmE-Era-EngA-EngB-Septin-like GTPase superfamily. TrmE GTPase family. Homodimer. Heterotetramer of two MnmE and two MnmG subunits. It depends on K(+) as a cofactor.

It is found in the cytoplasm. In terms of biological role, exhibits a very high intrinsic GTPase hydrolysis rate. Involved in the addition of a carboxymethylaminomethyl (cmnm) group at the wobble position (U34) of certain tRNAs, forming tRNA-cmnm(5)s(2)U34. The polypeptide is tRNA modification GTPase MnmE (Proteus mirabilis (strain HI4320)).